The chain runs to 122 residues: Large ribosomal subunit protein bL12 (122 aa).

This sequence belongs to the bacterial ribosomal protein bL12 family. Homodimer. Part of the ribosomal stalk of the 50S ribosomal subunit. Forms a multimeric L10(L12)X complex, where L10 forms an elongated spine to which 2 to 4 L12 dimers bind in a sequential fashion. Binds GTP-bound translation factors.

Functionally, forms part of the ribosomal stalk which helps the ribosome interact with GTP-bound translation factors. Is thus essential for accurate translation. The sequence is that of Large ribosomal subunit protein bL12 from Deinococcus radiodurans (strain ATCC 13939 / DSM 20539 / JCM 16871 / CCUG 27074 / LMG 4051 / NBRC 15346 / NCIMB 9279 / VKM B-1422 / R1).